The chain runs to 162 residues: Photosystem II extrinsic protein V (162 aa).

The first 26 residues, 1–26 (MFNKNFWTSIIIGCLFCTITYSGVNA), serve as a signal peptide directing secretion. Cys-62, Cys-65, His-66, and His-117 together coordinate heme c.

This sequence belongs to the cytochrome c family. PsbV subfamily. PSII is composed of 1 copy each of membrane proteins PsbA, PsbB, PsbC, PsbD, PsbE, PsbF, PsbH, PsbI, PsbJ, PsbK, PsbL, PsbM, PsbT, PsbX, PsbY, PsbZ, Psb30/Ycf12, at least 3 peripheral proteins of the oxygen-evolving complex and a large number of cofactors. It forms dimeric complexes. Requires heme c as cofactor.

The protein resides in the plastid. The protein localises to the cyanelle thylakoid membrane. Its function is as follows. One of the extrinsic, lumenal subunits of photosystem II (PSII). PSII is a light-driven water plastoquinone oxidoreductase, using light energy to abstract electrons from H(2)O, generating a proton gradient subsequently used for ATP formation. The extrinsic proteins stabilize the structure of photosystem II oxygen-evolving complex (OEC), the ion environment of oxygen evolution and protect the OEC against heat-induced inactivation. The chain is Photosystem II extrinsic protein V from Cyanophora paradoxa.